The chain runs to 467 residues: Glutamine synthetase (467 aa).

In terms of domain architecture, GS beta-grasp spans 11-95 (HDVKWIDLRF…IVCDIIEPST (85 aa)). In terms of domain architecture, GS catalytic spans 103 to 467 (PRAIARRAEE…PLEYDLYYSV (365 aa)). Mg(2+) is bound by residues Glu-128 and Glu-130. Residue Glu-206 coordinates ATP. Mg(2+) is bound by residues Glu-211 and Glu-219. Residues 263–264 (NG) and Gly-264 each bind L-glutamate. His-268 contacts Mg(2+). ATP-binding positions include 270–272 (HMS) and Ser-272. L-glutamate-binding residues include Arg-320, Glu-326, and Arg-338. Arg-338, Arg-343, and Lys-351 together coordinate ATP. Glu-356 is a binding site for Mg(2+). Position 358 (Arg-358) interacts with L-glutamate. Tyr-396 carries the O-AMP-tyrosine modification.

It belongs to the glutamine synthetase family. Oligomer of 12 subunits arranged in the form of two hexameric ring. Mg(2+) is required as a cofactor.

The protein resides in the cytoplasm. It carries out the reaction L-glutamate + NH4(+) + ATP = L-glutamine + ADP + phosphate + H(+). The activity of this enzyme could be controlled by adenylation under conditions of abundant glutamine. Functionally, catalyzes the ATP-dependent biosynthesis of glutamine from glutamate and ammonia. The sequence is that of Glutamine synthetase from Azotobacter vinelandii.